We begin with the raw amino-acid sequence, 148 residues long: Protein PLANT CADMIUM RESISTANCE 9 (148 aa).

Residues 59–78 traverse the membrane as a helical segment; that stretch reads LAGLMVVAMSSIGCGWYYAS.

It belongs to the cornifelin family.

It is found in the membrane. Its function is as follows. May be involved in cadmium resistance. This chain is Protein PLANT CADMIUM RESISTANCE 9 (PCR9), found in Arabidopsis thaliana (Mouse-ear cress).